A 430-amino-acid chain; its full sequence is uncharacterized protein (430 aa).

The protein resides in the cytoplasm. The protein localises to the nucleus. This is an uncharacterized protein from Schizosaccharomyces pombe (strain 972 / ATCC 24843) (Fission yeast).